The primary structure comprises 443 residues: Thymidine phosphorylase (443 aa).

This sequence belongs to the thymidine/pyrimidine-nucleoside phosphorylase family. Homodimer.

It carries out the reaction thymidine + phosphate = 2-deoxy-alpha-D-ribose 1-phosphate + thymine. It participates in pyrimidine metabolism; dTMP biosynthesis via salvage pathway; dTMP from thymine: step 1/2. Its function is as follows. The enzymes which catalyze the reversible phosphorolysis of pyrimidine nucleosides are involved in the degradation of these compounds and in their utilization as carbon and energy sources, or in the rescue of pyrimidine bases for nucleotide synthesis. The polypeptide is Thymidine phosphorylase (Shewanella sp. (strain MR-4)).